A 636-amino-acid polypeptide reads, in one-letter code: Putative ankyrin repeat protein L766 (636 aa).

ANK repeat units follow at residues 63–97 (NNYL…DYEL), 99–129 (STCH…YIDS), 130–159 (FGNI…FFNC), 161–190 (YYYL…KSNN), 230–259 (FDEK…NYDF), 261–284 (TIIN…YLTD), 322–355 (SRII…KTSI), 372–400 (NPDE…NIPD), 425–455 (DSLE…DTTI), 517–546 (NSIE…NDNN), and 548–575 (LSWA…DIYQ).

In Acanthamoeba polyphaga mimivirus (APMV), this protein is Putative ankyrin repeat protein L766.